The following is a 76-amino-acid chain: Gallerimycin (76 aa).

The first 19 residues, 1–19, serve as a signal peptide directing secretion; it reads MKIAFIVAISLAFLAVTSC.

This sequence belongs to the invertebrate defensin family.

In terms of biological role, has antifungal activity against the entomopathogenic fungus M.nisopliae, but does not display any antifungal activity against S.cerevisiae nor any antimicrobial activity against M.luteus, B.subtilis, and E.coli. This Galleria mellonella (Greater wax moth) protein is Gallerimycin (LOC113523440).